The primary structure comprises 343 residues: Dihydroorotase (343 aa).

2 residues coordinate Zn(2+): His-13 and His-15. Substrate is bound by residues 15–17 (HLR) and Asn-41. Zn(2+)-binding residues include Lys-99, His-136, and His-174. Lys-99 carries the N6-carboxylysine modification. His-136 serves as a coordination point for substrate. A substrate-binding site is contributed by Leu-219. Asp-247 lines the Zn(2+) pocket. The active site involves Asp-247. Residues His-251 and Ala-263 each coordinate substrate.

The protein belongs to the metallo-dependent hydrolases superfamily. DHOase family. Class II DHOase subfamily. Homodimer. Zn(2+) serves as cofactor.

It carries out the reaction (S)-dihydroorotate + H2O = N-carbamoyl-L-aspartate + H(+). It functions in the pathway pyrimidine metabolism; UMP biosynthesis via de novo pathway; (S)-dihydroorotate from bicarbonate: step 3/3. In terms of biological role, catalyzes the reversible cyclization of carbamoyl aspartate to dihydroorotate. This chain is Dihydroorotase, found in Shewanella baltica (strain OS155 / ATCC BAA-1091).